The primary structure comprises 432 residues: Keratin, type I cytoskeletal 17 (432 aa).

The disordered stretch occupies residues 1-24 (MTTTIRQFTSSSSIKGSSGLGGGS). Positions 1 to 83 (MTTTIRQFTS…GGVDGLLAGG (83 aa)) are head. Ser-12 and Ser-13 each carry phosphoserine. Lys-15 participates in a covalent cross-link: Glycyl lysine isopeptide (Lys-Gly) (interchain with G-Cter in SUMO1); alternate. Residue Lys-15 forms a Glycyl lysine isopeptide (Lys-Gly) (interchain with G-Cter in SUMO2); alternate linkage. Phosphoserine is present on residues Ser-25, Ser-32, and Ser-39. Position 44 is a phosphoserine; by RPS6KA1 (Ser-44). The coil 1A stretch occupies residues 84 to 120 (EKATMQNLNDRLASYLDKVRALEEANTELEVKIRDWY). The IF rod domain occupies 84 to 395 (EKATMQNLND…RLLEGEDAHL (312 aa)). Thr-110 carries the post-translational modification Phosphothreonine. Residues 121–138 (QRQAPGPARDYSQYYRTI) form a linker 1 region. Positions 139-230 (EELQNKILTA…NHEEEMNALR (92 aa)) are coil 1B. Positions 231-250 (GQVGGEINVEMDAAPGVDLS) are linker 12. Residues 251–392 (RILNEMRDQY…TYRRLLEGED (142 aa)) form a coil 2 region. A Glycyl lysine isopeptide (Lys-Gly) (interchain with G-Cter in SUMO2) cross-link involves residue Lys-278. Thr-279 is modified (phosphothreonine). Ser-323 is modified (phosphoserine). Positions 393 to 432 (AHLTQYKKEPVTTRQVRTIVEEVQDGKVISSREQVHQTTR) are tail. Residues Lys-399, Lys-400, and Lys-419 each participate in a glycyl lysine isopeptide (Lys-Gly) (interchain with G-Cter in SUMO1); alternate cross-link. Residues Lys-399, Lys-400, and Lys-419 each participate in a glycyl lysine isopeptide (Lys-Gly) (interchain with G-Cter in SUMO2); alternate cross-link.

Belongs to the intermediate filament family. As to quaternary structure, heterodimer of a type I and a type II keratin. KRT17 associates with KRT6 isomers (KRT6A or KRT6B). Interacts with TRADD and SFN. Post-translationally, phosphorylation at Ser-44 occurs in a growth- and stress-dependent fashion in skin keratinocytes, it has no effect on filament organization.

The protein localises to the cytoplasm. Functionally, type I keratin involved in the formation and maintenance of various skin appendages, specifically in determining shape and orientation of hair. Required for the correct growth of hair follicles, in particular for the persistence of the anagen (growth) state. Modulates the function of TNF-alpha in the specific context of hair cycling. Regulates protein synthesis and epithelial cell growth through binding to the adapter protein SFN and by stimulating Akt/mTOR pathway. Involved in tissue repair. May be a marker of basal cell differentiation in complex epithelia and therefore indicative of a certain type of epithelial 'stem cells'. Acts as a promoter of epithelial proliferation by acting a regulator of immune response in skin: promotes Th1/Th17-dominated immune environment contributing to the development of basaloid skin tumors. May act as an autoantigen in the immunopathogenesis of psoriasis, with certain peptide regions being a major target for autoreactive T-cells and hence causing their proliferation. In Pan troglodytes (Chimpanzee), this protein is Keratin, type I cytoskeletal 17.